The following is a 45-amino-acid chain: Photosystem II reaction center protein K (45 aa).

A propeptide spanning residues 1–8 (MNSALFLA) is cleaved from the precursor. A helical transmembrane segment spans residues 23–43 (ILPVIPVFFLLLAFVWQAAIG).

It belongs to the PsbK family. In terms of assembly, PSII is composed of 1 copy each of membrane proteins PsbA, PsbB, PsbC, PsbD, PsbE, PsbF, PsbH, PsbI, PsbJ, PsbK, PsbL, PsbM, PsbT, PsbX, PsbY, PsbZ, Psb30/Ycf12, at least 3 peripheral proteins of the oxygen-evolving complex and a large number of cofactors. It forms dimeric complexes.

Its subcellular location is the plastid. The protein localises to the chloroplast thylakoid membrane. Its function is as follows. One of the components of the core complex of photosystem II (PSII). PSII is a light-driven water:plastoquinone oxidoreductase that uses light energy to abstract electrons from H(2)O, generating O(2) and a proton gradient subsequently used for ATP formation. It consists of a core antenna complex that captures photons, and an electron transfer chain that converts photonic excitation into a charge separation. The chain is Photosystem II reaction center protein K from Porphyra purpurea (Red seaweed).